The sequence spans 388 residues: Chorismate synthase (388 aa).

Positions 39 and 45 each coordinate NADP(+). Residues 130-132 (RSS), 251-252 (NA), G296, 311-315 (KPIPT), and R337 contribute to the FMN site.

Belongs to the chorismate synthase family. As to quaternary structure, homotetramer. Requires FMNH2 as cofactor.

It catalyses the reaction 5-O-(1-carboxyvinyl)-3-phosphoshikimate = chorismate + phosphate. Its pathway is metabolic intermediate biosynthesis; chorismate biosynthesis; chorismate from D-erythrose 4-phosphate and phosphoenolpyruvate: step 7/7. In terms of biological role, catalyzes the anti-1,4-elimination of the C-3 phosphate and the C-6 proR hydrogen from 5-enolpyruvylshikimate-3-phosphate (EPSP) to yield chorismate, which is the branch point compound that serves as the starting substrate for the three terminal pathways of aromatic amino acid biosynthesis. This reaction introduces a second double bond into the aromatic ring system. The sequence is that of Chorismate synthase from Streptococcus pneumoniae (strain ATCC 700669 / Spain 23F-1).